Here is an 883-residue protein sequence, read N- to C-terminus: Mitogen-activated protein kinase kinase kinase YODA (883 aa).

3 disordered regions span residues 28 to 193, 303 to 364, and 376 to 396; these read GFAS…AEMF, CSPE…PPLL, and SAATSPSVPRSPARAEATVSP. A compositionally biased stretch (low complexity) spans 57 to 72; that stretch reads SRLPSRSPSPSTRVSR. Over residues 94–105 the composition is skewed to polar residues; it reads VTSTDSGMNGSQ. Over residues 143–165 the composition is skewed to low complexity; that stretch reads SVSSGSSVGDIPSDSLLSPLASD. Composition is skewed to polar residues over residues 167–189 and 314–328; these read ENGNRTPVNISSRDQSMHSNKNS and RMTSPGPSSRIQSGA. The Protein kinase domain occupies 400-656; it reads WKKGRLLGMG…AAQLLDHAFV (257 aa). ATP is bound by residues 406 to 414 and Lys-429; that span reads LGMGSFGHV. Residue Asp-525 is the Proton acceptor of the active site. Disordered stretches follow at residues 712-773 and 787-838; these read GSGF…GAIP and EGIG…IQPG. Low complexity predominate over residues 733 to 756; that stretch reads SPIFHSHSPHISGRRSPSPISSPH.

The protein belongs to the protein kinase superfamily. STE Ser/Thr protein kinase family. MAP kinase kinase kinase subfamily. As to quaternary structure, interacts with ASK7. Interacts with BSK12/SSP. Binds to BASL and MPK6. Expressed in roots, leaves, guard cells, stems, flowers and siliques.

The protein localises to the cytoplasm. The protein resides in the cell cortex. Its subcellular location is the cell membrane. The enzyme catalyses L-seryl-[protein] + ATP = O-phospho-L-seryl-[protein] + ADP + H(+). It carries out the reaction L-threonyl-[protein] + ATP = O-phospho-L-threonyl-[protein] + ADP + H(+). With respect to regulation, contains an N-terminal autoinhibitory domain. Functionally, functions in a MAP kinase cascade that acts as a molecular switch to regulate the first cell fate decisions in the zygote and the early embryo. Promotes elongation of the zygote and development of its basal daughter cell into the extra-embryonic suspensor. In stomatal development, acts downstream of the LRR receptor TMM, but upstream of the MKK4/MKK5-MPK3/MPK6 module to regulate stomatal cell fate before the guard mother cell (GMC) is specified. Plays a central role in both guard cell identity and pattern formation. This MAPK cascade also functions downstream of the ER receptor in regulating coordinated local cell proliferation, which shapes the morphology of plant organs. Upon brassinosteroid signaling, is inhibited by phosphorylation of its auto-inhibitory N-terminal domain by the GSK3-like kinase ASK7. The chain is Mitogen-activated protein kinase kinase kinase YODA from Arabidopsis thaliana (Mouse-ear cress).